The chain runs to 92 residues: Putative pterin-4-alpha-carbinolamine dehydratase (92 aa).

This sequence belongs to the pterin-4-alpha-carbinolamine dehydratase family.

It carries out the reaction (4aS,6R)-4a-hydroxy-L-erythro-5,6,7,8-tetrahydrobiopterin = (6R)-L-erythro-6,7-dihydrobiopterin + H2O. The chain is Putative pterin-4-alpha-carbinolamine dehydratase from Acidobacterium capsulatum (strain ATCC 51196 / DSM 11244 / BCRC 80197 / JCM 7670 / NBRC 15755 / NCIMB 13165 / 161).